The chain runs to 101 residues: ATP-dependent Clp protease adapter protein ClpS (101 aa).

It belongs to the ClpS family. In terms of assembly, binds to the N-terminal domain of the chaperone ClpA.

Involved in the modulation of the specificity of the ClpAP-mediated ATP-dependent protein degradation. This is ATP-dependent Clp protease adapter protein ClpS from Corynebacterium jeikeium (strain K411).